The primary structure comprises 113 residues: UPF0102 protein Dgeo_1894 (113 aa).

This sequence belongs to the UPF0102 family.

This Deinococcus geothermalis (strain DSM 11300 / CIP 105573 / AG-3a) protein is UPF0102 protein Dgeo_1894.